Consider the following 39-residue polypeptide: Larval cuticle protein SC6 (39 aa).

A Chitin-binding type R&amp;R domain is found at 15–39; sequence VDQFKYGLELDNSIKADQEGHLEGD.

Functionally, component of the cuticle of the larva of flesh fly. In Sarcophaga bullata (Grey flesh fly), this protein is Larval cuticle protein SC6.